The following is a 276-amino-acid chain: Hydroxymethylpyrimidine/phosphomethylpyrimidine kinase (276 aa).

Gln45 is a binding site for 4-amino-5-hydroxymethyl-2-methylpyrimidine.

The protein belongs to the ThiD family.

The catalysed reaction is 4-amino-5-hydroxymethyl-2-methylpyrimidine + ATP = 4-amino-2-methyl-5-(phosphooxymethyl)pyrimidine + ADP + H(+). The enzyme catalyses 4-amino-2-methyl-5-(phosphooxymethyl)pyrimidine + ATP = 4-amino-2-methyl-5-(diphosphooxymethyl)pyrimidine + ADP. Its pathway is cofactor biosynthesis; thiamine diphosphate biosynthesis; 4-amino-2-methyl-5-diphosphomethylpyrimidine from 5-amino-1-(5-phospho-D-ribosyl)imidazole: step 2/3. The protein operates within cofactor biosynthesis; thiamine diphosphate biosynthesis; 4-amino-2-methyl-5-diphosphomethylpyrimidine from 5-amino-1-(5-phospho-D-ribosyl)imidazole: step 3/3. Functionally, catalyzes the phosphorylation of hydroxymethylpyrimidine phosphate (HMP-P) to HMP-PP, and of HMP to HMP-P. The polypeptide is Hydroxymethylpyrimidine/phosphomethylpyrimidine kinase (thiD) (Staphylococcus aureus (strain MRSA252)).